Reading from the N-terminus, the 413-residue chain is FAD-dependent monooxygenase vrtH (413 aa).

Positions 1–23 (MQRANHTRPVLIIGAGLSGLAIG) are cleaved as a signal peptide. Residue asparagine 5 is glycosylated (N-linked (GlcNAc...) asparagine). Positions 37 and 48 each coordinate FAD. An N-linked (GlcNAc...) asparagine glycan is attached at asparagine 94. Residue arginine 120 coordinates FAD. An N-linked (GlcNAc...) asparagine glycan is attached at asparagine 232. 2 residues coordinate FAD: aspartate 327 and glycine 340.

This sequence belongs to the paxM FAD-dependent monooxygenase family. Requires FAD as cofactor.

It participates in secondary metabolite biosynthesis; terpenoid biosynthesis. FAD-dependent monooxygenase; part of the gene cluster that mediates the biosynthesis of viridicatumtoxin, a tetracycline-like fungal meroterpenoid with a unique, fused spirobicyclic ring system. The first step of the pathway is the production of the malonamoyl-CoA starter unit for the polyketide synthase vrtA. The aldolase vrtJ may be involved in the synthesis of the malonamate substrate for malonamoyl-CoA synthetase vrtB. The polyketide synthase vrtA then may utilize the malonamoyl-CoA starter unit, followed by sequential condensation of eight malonyl-CoA units to form the polyketide backbone. The cyclization of the last ring could be mediated by the lactamase-like protein vrtG. The proposed post-PKS tailoring steps are a hydroxylation at C5 catalyzed the cytochrome P450 monooxygenase vrtE, a hydroxylation at C12a catalyzed by VrtH and/or VrtI, and an O-methylation by the O-methyltransferase vrtF. VrtC is then proposed to catalyze the transfer of a geranyl group synthesized by vrtD to the aromatic C ring of the tetracyclic polyketide intermediate of viridicatumtoxin to yield previridicatumtoxin. Finally, the cytochrome P450 monooxygenase vrtK catalyzes the spirocyclization of the geranyl moiety of previridicatumtoxin to afford viridicatumtoxin. The chain is FAD-dependent monooxygenase vrtH from Penicillium aethiopicum.